The sequence spans 347 residues: MRPEPTEHPERTAAQRLYQYNVDLKVAFVLYAVAKLHLPDLLADGPRTTADLAAATGSDPSRLRRLLRAAAGADALREVPEDSFELAPMGDLLRSGHPRSMRGMTTFFAEPDVLAAYGDLVESVRTGVPAFQLRHREPLYDFLARPQHKEVRDEFDAAMVEFGQYFADDFLTSFDFGRFTRFADIGGGRGQFLAGVLTAVPSSTGVLVDGPAVAASAHKFLASQNLTERVEVRIGDFFDVLPTGCDAYVLRGVLEDWADADAVRLLVRIRQAMGDAPEARLLILDSVIGETGELGKVLDLDMLVLVEGEHRTRAQWDDLLARAGFDIVGIHPAGDVWAVIECRGTAG.

S-adenosyl-L-methionine is bound by residues D209 and 235–237 (GDF).

Belongs to the class I-like SAM-binding methyltransferase superfamily. Cation-independent O-methyltransferase family. In terms of assembly, homodimer.

It catalyses the reaction 8-amino-8-demethylriboflavin + 2 S-adenosyl-L-methionine = roseoflavin + 2 S-adenosyl-L-homocysteine + 2 H(+). Its pathway is antibiotic biosynthesis. Its function is as follows. Catalyzes the S-adenosyl methionine-dependent conversion of 8-amino-8-demethyl-D-riboflavin (AF) into 8-methylamino-8-demethyl-D-riboflavin (MAF) and roseoflavin (RoF), the last two steps in the biosynthesis of the antibiotic roseoflavin. The chain is 8-amino-8-demethylriboflavin N,N-dimethyltransferase from Streptomyces davaonensis (strain DSM 101723 / JCM 4913 / KCC S-0913 / 768).